Reading from the N-terminus, the 90-residue chain is Small ribosomal subunit protein bS16 (90 aa).

The protein belongs to the bacterial ribosomal protein bS16 family.

The polypeptide is Small ribosomal subunit protein bS16 (Geobacillus sp. (strain WCH70)).